An 827-amino-acid chain; its full sequence is ADP-ribosylation factor GTPase-activating protein AGD3 (827 aa).

Residues 1-225 enclose the BAR domain; the sequence is MHFTKLDDSP…INQVLTYAQQ (225 aa). Coiled coils occupy residues 116–139 and 223–253; these read HEVK…REKF and AQQS…RESR. Residues 246–269 are disordered; it reads RQVDRESRWGSNGSNGSPNGDGIQ. Positions 255–267 are enriched in low complexity; it reads GSNGSNGSPNGDG. Residues 292–430 enclose the PH domain; that stretch reads QTIRQGYLSK…WIEKITGVIA (139 aa). The segment at 439–467 is disordered; it reads EQRLPGSPMGSGHHRSASESSSYESSEYD. A Phosphoserine modification is found at serine 445. The Arf-GAP domain occupies 501 to 643; sequence EKPIDALRKV…LFVRRSRDSD (143 aa). The C4-type zinc-finger motif lies at 516 to 539; sequence CADCGAPEPDWASLNLGVLVCIEC. 3 ANK repeats span residues 728–757, 761–790, and 794–825; these read GGSS…NVNA, SGQT…DPEA, and EGKT…YNHR.

In terms of assembly, homodimer. Interacts with DRP1A. Interacts with VAB. Broadly expressed. Detected in developing veins of the leaf and root. Detected in roots, hypocotyls, cotyledons, leaves, siliques and shoot apical meristems.

It localises to the golgi apparatus. It is found in the trans-Golgi network. ARF GAP activity strongly enhanced by phosphatidylinositol 4-monophosphate (PIP) and moderately enhanced by phosphatidylinositol 4,5-bisphosphate (PIP2). Its function is as follows. GTPase-activating protein (GAP) for ADP ribosylation factor (ARF). Involved in the spatial control of provascular differentiation. Required for the formation of the normal pattern of continuous secondary veins. Involved in auxin signaling but not in polar auxin transport or in auxin responses. Required for PIN1 internalization in roots. In Arabidopsis thaliana (Mouse-ear cress), this protein is ADP-ribosylation factor GTPase-activating protein AGD3 (AGD3).